The primary structure comprises 178 residues: Ribosome maturation factor RimM (178 aa).

One can recognise a PRC barrel domain in the interval 99–178 (EGDFYWHDLI…TIEVDWDAGF (80 aa)).

The protein belongs to the RimM family. In terms of assembly, binds ribosomal protein uS19.

The protein resides in the cytoplasm. Its function is as follows. An accessory protein needed during the final step in the assembly of 30S ribosomal subunit, possibly for assembly of the head region. Essential for efficient processing of 16S rRNA. May be needed both before and after RbfA during the maturation of 16S rRNA. It has affinity for free ribosomal 30S subunits but not for 70S ribosomes. In Mannheimia succiniciproducens (strain KCTC 0769BP / MBEL55E), this protein is Ribosome maturation factor RimM.